Here is a 147-residue protein sequence, read N- to C-terminus: D-aminoacyl-tRNA deacylase (147 aa).

The short motif at 136-137 (GP) is the Gly-cisPro motif, important for rejection of L-amino acids element.

This sequence belongs to the DTD family. As to quaternary structure, homodimer.

Its subcellular location is the cytoplasm. The catalysed reaction is glycyl-tRNA(Ala) + H2O = tRNA(Ala) + glycine + H(+). It carries out the reaction a D-aminoacyl-tRNA + H2O = a tRNA + a D-alpha-amino acid + H(+). Its function is as follows. An aminoacyl-tRNA editing enzyme that deacylates mischarged D-aminoacyl-tRNAs. Also deacylates mischarged glycyl-tRNA(Ala), protecting cells against glycine mischarging by AlaRS. Acts via tRNA-based rather than protein-based catalysis; rejects L-amino acids rather than detecting D-amino acids in the active site. By recycling D-aminoacyl-tRNA to D-amino acids and free tRNA molecules, this enzyme counteracts the toxicity associated with the formation of D-aminoacyl-tRNA entities in vivo and helps enforce protein L-homochirality. The protein is D-aminoacyl-tRNA deacylase of Streptococcus uberis (strain ATCC BAA-854 / 0140J).